A 215-amino-acid chain; its full sequence is Cytochrome b6 (215 aa).

A helical membrane pass occupies residues isoleucine 32–phenylalanine 52. Cysteine 35 contributes to the heme c binding site. Residues histidine 86 and histidine 100 each coordinate heme b. Helical transmembrane passes span alanine 90–phenylalanine 110, leucine 116–tyrosine 136, and leucine 186–isoleucine 206. Heme b contacts are provided by histidine 187 and histidine 202.

This sequence belongs to the cytochrome b family. PetB subfamily. In terms of assembly, the 4 large subunits of the cytochrome b6-f complex are cytochrome b6, subunit IV (17 kDa polypeptide, PetD), cytochrome f and the Rieske protein, while the 4 small subunits are PetG, PetL, PetM and PetN. The complex functions as a dimer. It depends on heme b as a cofactor. Heme c serves as cofactor.

It is found in the plastid. It localises to the chloroplast thylakoid membrane. Its function is as follows. Component of the cytochrome b6-f complex, which mediates electron transfer between photosystem II (PSII) and photosystem I (PSI), cyclic electron flow around PSI, and state transitions. The polypeptide is Cytochrome b6 (Chaetosphaeridium globosum (Charophycean green alga)).